The sequence spans 72 residues: uncharacterized protein (72 aa).

The first 17 residues, 1–17 (MSLGLAIAVGIVLGVVA), serve as a signal peptide directing secretion.

This is an uncharacterized protein from Schizosaccharomyces pombe (strain 972 / ATCC 24843) (Fission yeast).